We begin with the raw amino-acid sequence, 128 residues long: Large ribosomal subunit protein bL19 (128 aa).

This sequence belongs to the bacterial ribosomal protein bL19 family.

Its function is as follows. This protein is located at the 30S-50S ribosomal subunit interface and may play a role in the structure and function of the aminoacyl-tRNA binding site. The sequence is that of Large ribosomal subunit protein bL19 from Bradyrhizobium sp. (strain ORS 278).